The sequence spans 330 residues: Ubiquinone biosynthesis protein COQ4, mitochondrial (330 aa).

A mitochondrion-targeting transit peptide spans 1–31 (MLQSTKVTKSVLTNVLRVEQRRGFLLSGAAV). The Zn(2+) site is built by H212, D213, H216, and E228.

This sequence belongs to the COQ4 family. As to quaternary structure, component of a multi-subunit COQ enzyme complex, composed of at least COQ3, COQ4, COQ5, COQ6, COQ7 and COQ9. Requires Zn(2+) as cofactor.

The protein resides in the mitochondrion inner membrane. The catalysed reaction is a 4-hydroxy-3-methoxy-5-(all-trans-polyprenyl)benzoate + H(+) = a 2-methoxy-6-(all-trans-polyprenyl)phenol + CO2. It participates in cofactor biosynthesis; ubiquinone biosynthesis. Functionally, lyase that catalyzes the C1-decarboxylation of 4-hydroxy-3-methoxy-5-(all-trans-polyprenyl)benzoic acid into 2-methoxy-6-(all-trans-polyprenyl)phenol during ubiquinone biosynthesis. This chain is Ubiquinone biosynthesis protein COQ4, mitochondrial, found in Candida glabrata (strain ATCC 2001 / BCRC 20586 / JCM 3761 / NBRC 0622 / NRRL Y-65 / CBS 138) (Yeast).